We begin with the raw amino-acid sequence, 1021 residues long: Sodium/potassium-transporting ATPase subunit alpha-1 (1021 aa).

The propeptide occupies methionine 1–valine 5. Residues methionine 1 to glutamate 11 are compositionally biased toward basic and acidic residues. The disordered stretch occupies residues methionine 1–glutamate 36. Residues glycine 6–proline 85 lie on the Cytoplasmic side of the membrane. Lysine 9 bears the N6-acetyllysine mark. Tyrosine 10 carries the post-translational modification Phosphotyrosine. Phosphoserine; by PKC is present on serine 16. N6-acetyllysine is present on lysine 21. Basic and acidic residues predominate over residues lysine 26–glutamate 36. 2 positions are modified to phosphoserine: serine 38 and serine 45. The tract at residues proline 80–proline 82 is phosphoinositide-3 kinase binding. A helical membrane pass occupies residues glutamate 86–alanine 106. Residues valine 107–tyrosine 129 are Extracellular-facing. The chain crosses the membrane as a helical span at residues leucine 130 to alanine 150. The Cytoplasmic portion of the chain corresponds to lysine 151–isoleucine 286. Serine 226 bears the Phosphoserine mark. Residue tyrosine 258 is modified to Phosphotyrosine. Residues glutamate 287 to isoleucine 306 traverse the membrane as a helical segment. The Extracellular segment spans residues leucine 307 to alanine 318. A helical membrane pass occupies residues valine 319–alanine 336. The Cytoplasmic portion of the chain corresponds to threonine 337–leucine 770. Residue aspartate 374 is the 4-aspartylphosphate intermediate of the active site. Phosphoserine occurs at positions 450 and 482. Lysine 485 is an ATP binding site. Tyrosine 540 is modified (phosphotyrosine). The mediates interaction with SCN7A stretch occupies residues arginine 594–aspartate 715. A Phosphoserine modification is found at serine 666. The Mg(2+) site is built by aspartate 715 and aspartate 719. A helical transmembrane segment spans residues lysine 771–isoleucine 790. Residues phenylalanine 791–leucine 800 lie on the Extracellular side of the membrane. A helical transmembrane segment spans residues glycine 801 to alanine 821. Topologically, residues tyrosine 822–lysine 841 are cytoplasmic. Residues leucine 842–phenylalanine 864 traverse the membrane as a helical segment. The Extracellular portion of the chain corresponds to phenylalanine 865 to cysteine 916. The helical transmembrane segment at histidine 917–lysine 936 threads the bilayer. Over threonine 937–asparagine 949 the chain is Cytoplasmic. Serine 941 is subject to Phosphoserine; by PKA. Residues lysine 950–tyrosine 968 traverse the membrane as a helical segment. The Extracellular portion of the chain corresponds to cysteine 969–proline 983. The chain crosses the membrane as a helical span at residues threonine 984–lysine 1004. The Cytoplasmic portion of the chain corresponds to leucine 1005–tyrosine 1021.

Belongs to the cation transport ATPase (P-type) (TC 3.A.3) family. Type IIC subfamily. As to quaternary structure, the sodium/potassium-transporting ATPase is composed of a catalytic alpha subunit, an auxiliary non-catalytic beta subunit and an additional regulatory subunit. Interacts with regulatory subunit FXYD1. Interacts with regulatory subunit FXYD3. Interacts with SIK1. Interacts with SLC35G1 and STIM1. Interacts with CLN3; this interaction regulates the sodium/potassium-transporting ATPase complex localization at the plasma membrane. Interacts with SCN7A; activates ATP1A1 P-type sodium:potassium-exchanging transporter activity which indirectly signals to nearby neurons to regulate sodium homeostasis. In terms of processing, phosphorylation on Tyr-10 modulates pumping activity. Phosphorylation of Ser-941 by PKA modulates the response of ATP1A1 to PKC. Dephosphorylation by protein phosphatase 2A (PP2A) following increases in intracellular sodium, leading to increase catalytic activity.

The protein resides in the cell membrane. The protein localises to the basolateral cell membrane. Its subcellular location is the sarcolemma. It localises to the cell projection. It is found in the axon. The protein resides in the melanosome. The enzyme catalyses K(+)(out) + Na(+)(in) + ATP + H2O = K(+)(in) + Na(+)(out) + ADP + phosphate + H(+). With respect to regulation, specifically inhibited by cardiac glycosides such as digoxin or ouabain. In terms of biological role, this is the catalytic component of the active enzyme, which catalyzes the hydrolysis of ATP coupled with the exchange of sodium and potassium ions across the plasma membrane. This action creates the electrochemical gradient of sodium and potassium ions, providing the energy for active transport of various nutrients. Could also be part of an osmosensory signaling pathway that senses body-fluid sodium levels and controls salt intake behavior as well as voluntary water intake to regulate sodium homeostasis. The chain is Sodium/potassium-transporting ATPase subunit alpha-1 (ATP1A1) from Ovis aries (Sheep).